The chain runs to 372 residues: Transaldolase 2 (372 aa).

The active-site Schiff-base intermediate with substrate is the Lys-140.

This sequence belongs to the transaldolase family. Type 2 subfamily.

The protein resides in the cytoplasm. The enzyme catalyses D-sedoheptulose 7-phosphate + D-glyceraldehyde 3-phosphate = D-erythrose 4-phosphate + beta-D-fructose 6-phosphate. The protein operates within carbohydrate degradation; pentose phosphate pathway; D-glyceraldehyde 3-phosphate and beta-D-fructose 6-phosphate from D-ribose 5-phosphate and D-xylulose 5-phosphate (non-oxidative stage): step 2/3. Its function is as follows. Transaldolase is important for the balance of metabolites in the pentose-phosphate pathway. This is Transaldolase 2 from Streptomyces avermitilis (strain ATCC 31267 / DSM 46492 / JCM 5070 / NBRC 14893 / NCIMB 12804 / NRRL 8165 / MA-4680).